The sequence spans 545 residues: Methionine--tRNA ligase (545 aa).

A 'HIGH' region motif is present at residues 15–25 (PYANGPIHIGH). Zn(2+) contacts are provided by Cys146, Cys149, Cys159, and Cys162. A 'KMSKS' region motif is present at residues 332–336 (KLSKS). Lys335 is a binding site for ATP.

Belongs to the class-I aminoacyl-tRNA synthetase family. MetG type 1 subfamily. Monomer. Requires Zn(2+) as cofactor.

Its subcellular location is the cytoplasm. It carries out the reaction tRNA(Met) + L-methionine + ATP = L-methionyl-tRNA(Met) + AMP + diphosphate. Its function is as follows. Is required not only for elongation of protein synthesis but also for the initiation of all mRNA translation through initiator tRNA(fMet) aminoacylation. This is Methionine--tRNA ligase (metG) from Buchnera aphidicola subsp. Schizaphis graminum (strain Sg).